A 339-amino-acid chain; its full sequence is Zinc metalloprotease MJ0392 (339 aa).

The next 2 helical transmembrane spans lie at 10 to 30 and 33 to 53; these read IMGIPIELHITFILFLVVIIG and IMNNSIFWAVLFILLFVSVVL. His-54 serves as a coordination point for Zn(2+). Glu-55 is a catalytic residue. His-58 lines the Zn(2+) pocket. The next 2 membrane-spanning stretches (helical) occupy residues 96 to 116 and 125 to 145; these read IAGPLVSFIIGIVLLIVSQFF and LLYTLSLLNLMLGGFNLIPAF. Residue Asp-148 participates in Zn(2+) binding. Helical transmembrane passes span 180-200 and 251-271; these read IMLLFGLLSMNIILILVSLFV and YFGYPVVENGKLVGCIGIGNI. CBS domains are found at residues 226 to 281 and 281 to 335; these read MTPN…VRDY and YMEK…ELKE.

This sequence belongs to the peptidase M50B family. Monomer. The cofactor is Zn(2+).

Its subcellular location is the cell membrane. Inhibited by 1,10-phenanthroline. Its function is as follows. A site-2 regulated intramembrane protease (S2P) that cleaves type-2 transmembrane proteins within their membrane-spanning domains; its endogenous substrate is unknown. Regulated intramembrane proteolysis (RIP) occurs when an extracytoplasmic signal triggers a concerted proteolytic cascade to transmit information and elicit cellular responses. A membrane-spanning regulatory substrate protein is first cut extracytoplasmically (site-1 protease, S1P), then within the membrane itself (site-2 protease, S2P, this enzyme), while cytoplasmic proteases finish degrading the regulatory protein, liberating the effector protein. Possible signals, S1P and substrates are unknown in this organism. The sequence is that of Zinc metalloprotease MJ0392 from Methanocaldococcus jannaschii (strain ATCC 43067 / DSM 2661 / JAL-1 / JCM 10045 / NBRC 100440) (Methanococcus jannaschii).